A 446-amino-acid polypeptide reads, in one-letter code: Elongation factor Ts, mitochondrial (446 aa).

A mitochondrion-targeting transit peptide spans 1-33; that stretch reads MSGSRSALSVVRLAACAKPCTLGSTSSVLTRPF.

This sequence belongs to the EF-Ts family.

It localises to the mitochondrion. Functionally, associates with the EF-Tu.GDP complex and induces the exchange of GDP to GTP. It remains bound to the aminoacyl-tRNA.EF-Tu.GTP complex up to the GTP hydrolysis stage on the ribosome. This is Elongation factor Ts, mitochondrial from Mycosarcoma maydis (Corn smut fungus).